Reading from the N-terminus, the 1213-residue chain is SWI/SNF complex subunit SMARCC2 (1213 aa).

Positions 1–274 are marR-like, BRCT and chromo domains module; sequence MAVRKKDGGP…PVSRRKKISA (274 aa). In terms of domain architecture, MarR-like spans 10–136; that stretch reads PNVKYYEAAD…IEKSLVQNNC (127 aa). Residues 140 to 183 enclose the BRCT; N-terminus domain; that stretch reads PNIFLCPEIEPKLLGKLKDIVKRHQGTISEDKSNASHVVYPVPG. Residues 189-217 enclose the Chromo domain; that stretch reads EWVRPVMKRDKQVLLHWGYYPDSYDTWIP. Positions 233-257 constitute a BRCT; C-terminus domain; it reads KPRKVHAKWILDTDTFNEWMNEEDY. Positions 256-413 are disordered; sequence DYEVSDDKSP…GEQTKNPDLH (158 aa). Polar residues predominate over residues 275–284; it reads KTLTDEVNSP. Phosphoserine occurs at positions 283, 286, 302, 304, and 306. Residue K312 is modified to N6-(ADP-ribosyl)lysine. N6-acetyllysine is present on K326. Basic and acidic residues predominate over residues 331 to 344; sequence HREEEQEDLTKDMD. S347 and S387 each carry phosphoserine. The segment covering 379–398 has biased composition (acidic residues); the sequence is DLDEQDDESMETTGKDEDEN. Residues 424–521 enclose the SWIRM domain; sequence IIIPSYAAWF…YQVDAESRPT (98 aa). Glycyl lysine isopeptide (Lys-Gly) (interchain with G-Cter in SUMO2) cross-links involve residues K564, K566, K568, and K592. The region spanning 596–647 is the SANT domain; it reads SATREWTEQETLLLLEALEMYKDDWNKVSEHVGSRTQDECILHFLRLPIEDP. A Glycyl lysine isopeptide (Lys-Gly) (interchain with G-Cter in SUMO2) cross-link involves residue K704. A disordered region spans residues 724–848; the sequence is KVTGKADPAF…AEPEGERKTK (125 aa). Over residues 747-777 the composition is skewed to basic and acidic residues; the sequence is EPERIEESGTEEARPEGQAADEKKEPKEPRE. A Glycyl lysine isopeptide (Lys-Gly) (interchain with G-Cter in SUMO2) cross-link involves residue K787. Residues 788–848 show a composition bias toward basic and acidic residues; sequence EEISEVPKKD…AEPEGERKTK (61 aa). A Phosphoserine modification is found at S813. K848 participates in a covalent cross-link: Glycyl lysine isopeptide (Lys-Gly) (interchain with G-Cter in SUMO2). A coiled-coil region spans residues 907-934; that stretch reads EELETIMDREREALEYQRQQLLADRQAF. Disordered regions lie at residues 947-1073 and 1181-1213; these read RQQH…HPGV and LPSA…PPPQ. Residues 949–962 show a composition bias toward low complexity; sequence QHFQQMHQQQQQQP. A compositionally biased stretch (pro residues) spans 963–974; that stretch reads PTLPPGSQPIPP. The segment covering 975–1033 has biased composition (low complexity); it reads TGAAGPPTVHGLAVPPAAVASAPPGSGAPPGSLGPSEQIGQAGTTAGPQQPQQAGAPQP. Pro residues-rich tracts occupy residues 1034–1060 and 1185–1201; these read GAVP…PPSM and SPLP…PTAP.

The protein belongs to the SMARCC family. As to quaternary structure, component of the multiprotein chromatin-remodeling complexes SWI/SNF: SWI/SNF-A (BAF), SWI/SNF-B (PBAF) and related complexes. The canonical complex contains a catalytic subunit (either SMARCA4/BRG1/BAF190A or SMARCA2/BRM/BAF190B) and at least SMARCE1, ACTL6A/BAF53, SMARCC1/BAF155, SMARCC2/BAF170, and SMARCB1/SNF5/BAF47. Other subunits specific to each of the complexes may also be present permitting several possible combinations developmentally and tissue specific. Component of the BAF complex, which includes at least actin (ACTB), ARID1A/BAF250A, ARID1B/BAF250B, SMARCA2/BRM, SMARCA4/BRG1, ACTL6A/BAF53, ACTL6B/BAF53B, SMARCE1/BAF57, SMARCC1/BAF155, SMARCC2/BAF170, SMARCB1/SNF5/INI1, and one or more SMARCD1/BAF60A, SMARCD2/BAF60B, or SMARCD3/BAF60C. In muscle cells, the BAF complex also contains DPF3. Component of neural progenitors-specific chromatin remodeling complex (npBAF complex) composed of at least, ARID1A/BAF250A or ARID1B/BAF250B, SMARCD1/BAF60A, SMARCD3/BAF60C, SMARCA2/BRM/BAF190B, SMARCA4/BRG1/BAF190A, SMARCB1/BAF47, SMARCC1/BAF155, SMARCE1/BAF57, SMARCC2/BAF170, PHF10/BAF45A, ACTL6A/BAF53A and actin. Component of neuron-specific chromatin remodeling complex (nBAF complex) composed of at least, ARID1A/BAF250A or ARID1B/BAF250B, SMARCD1/BAF60A, SMARCD3/BAF60C, SMARCA2/BRM/BAF190B, SMARCA4/BRG1/BAF190A, SMARCB1/BAF47, SMARCC1/BAF155, SMARCE1/BAF57, SMARCC2/BAF170, DPF1/BAF45B, DPF3/BAF45C, ACTL6B/BAF53B and actin. Component of the SWI/SNF-B (PBAF) chromatin remodeling complex, at least composed of SMARCA4/BRG1, SMARCB1/BAF47/SNF5, ACTL6A/BAF53A or ACTL6B/BAF53B, SMARCE1/BAF57, SMARCD1/BAF60A, SMARCD2/BAF60B, perhaps SMARCD3/BAF60C, SMARCC1/BAF155, SMARCC2/BAF170, PBRM1/BAF180, ARID2/BAF200 and actin. May also interact with the SIN3A histone deacetylase transcription repressor complex in conjunction with SMARCA2 and SMARCA4. Interacts with SMARD1. Interacts with KDM6B. Interaction with RCOR1. Interacts with DPF2. Interacts with ERCC6. Interacts with FOS. Post-translationally, mono-ADP-ribosylation at Lys-312 by SIRT6 promotes recruitment to the enhancer region of the Heme oxygenase-1 (HO-1) locus, leading to transcription activation of the locus.

It is found in the nucleus. Its function is as follows. Involved in transcriptional activation and repression of select genes by chromatin remodeling (alteration of DNA-nucleosome topology). Component of SWI/SNF chromatin remodeling complexes that carry out key enzymatic activities, changing chromatin structure by altering DNA-histone contacts within a nucleosome in an ATP-dependent manner. Can stimulate the ATPase activity of the catalytic subunit of these complexes. May be required for CoREST dependent repression of neuronal specific gene promoters in non-neuronal cells. Belongs to the neural progenitors-specific chromatin remodeling complex (npBAF complex) and the neuron-specific chromatin remodeling complex (nBAF complex). During neural development a switch from a stem/progenitor to a postmitotic chromatin remodeling mechanism occurs as neurons exit the cell cycle and become committed to their adult state. The transition from proliferating neural stem/progenitor cells to postmitotic neurons requires a switch in subunit composition of the npBAF and nBAF complexes. As neural progenitors exit mitosis and differentiate into neurons, npBAF complexes which contain ACTL6A/BAF53A and PHF10/BAF45A, are exchanged for homologous alternative ACTL6B/BAF53B and DPF1/BAF45B or DPF3/BAF45C subunits in neuron-specific complexes (nBAF). The npBAF complex is essential for the self-renewal/proliferative capacity of the multipotent neural stem cells. The nBAF complex along with CREST plays a role regulating the activity of genes essential for dendrite growth. Critical regulator of myeloid differentiation, controlling granulocytopoiesis and the expression of genes involved in neutrophil granule formation. The chain is SWI/SNF complex subunit SMARCC2 (Smarcc2) from Mus musculus (Mouse).